A 380-amino-acid chain; its full sequence is Lipid-A-disaccharide synthase (380 aa).

Belongs to the LpxB family.

The enzyme catalyses a lipid X + a UDP-2-N,3-O-bis[(3R)-3-hydroxyacyl]-alpha-D-glucosamine = a lipid A disaccharide + UDP + H(+). It participates in bacterial outer membrane biogenesis; LPS lipid A biosynthesis. Condensation of UDP-2,3-diacylglucosamine and 2,3-diacylglucosamine-1-phosphate to form lipid A disaccharide, a precursor of lipid A, a phosphorylated glycolipid that anchors the lipopolysaccharide to the outer membrane of the cell. The protein is Lipid-A-disaccharide synthase of Francisella tularensis subsp. novicida (strain U112).